We begin with the raw amino-acid sequence, 648 residues long: Glutenin, high molecular weight subunit DY10 (648 aa).

A signal peptide spans 1–21 (MAKRLVLFAAVVIALVALTTA). A disordered region spans residues 127–648 (YYPGVTSPRQ…EGGDALSASQ (522 aa)). Composition is skewed to low complexity over residues 141-166 (PGQA…QGQQ), 195-236 (QQPG…WQQG), and 243-263 (QQLG…GQQG). Polar residues predominate over residues 264 to 274 (HYPTSLQQPGQ). Composition is skewed to low complexity over residues 284 to 353 (QQQP…GQQG), 360 to 416 (QQPG…GQQG), 459 to 502 (QQPG…PGQG), 510 to 523 (QGYY…PGQG), and 531 to 565 (QGHC…GQQG). The segment covering 578 to 592 (QQSGQGQQSGQGHQP) has biased composition (gly residues). Residues 593-604 (GQGQQSGQEQQG) are compositionally biased toward low complexity.

The protein belongs to the gliadin/glutenin family. As to quaternary structure, disulfide-bridge linked aggregates.

Glutenins are high-molecular weight seed storage proteins of wheat endosperm. Thought to be responsible for the visco-elastic property of wheat dough. The protein is Glutenin, high molecular weight subunit DY10 (GLU-D1-2B) of Triticum aestivum (Wheat).